Reading from the N-terminus, the 328-residue chain is Probable membrane-associated kinase regulator 4 (328 aa).

The segment at 213–253 (GQIKTERPKKQSNGSVSGSHRRSFSVSMRRQAAKSSNNKSS) is disordered. Residues 223 to 240 (QSNGSVSGSHRRSFSVSM) show a composition bias toward polar residues.

Its subcellular location is the cell membrane. The polypeptide is Probable membrane-associated kinase regulator 4 (MAKR4) (Arabidopsis thaliana (Mouse-ear cress)).